A 162-amino-acid polypeptide reads, in one-letter code: Transcriptional repressor NrdR (162 aa).

A zinc finger spans residues 3–34; the sequence is CPFCQFEGLKVTDSRDAMEMNAIRRRRECLNC. Residues 48-138 form the ATP-cone domain; that stretch reads VQVQKRDGTY…VYKRFKDLGE (91 aa).

The protein belongs to the NrdR family. Zn(2+) is required as a cofactor.

Negatively regulates transcription of bacterial ribonucleotide reductase nrd genes and operons by binding to NrdR-boxes. The sequence is that of Transcriptional repressor NrdR from Protochlamydia amoebophila (strain UWE25).